The chain runs to 345 residues: MIKSDIASTVPIIAIDAMGGDVGLDTTLAAVLSVKNQYPALKLILVGNQSIIEKHSLFPQIASQMEIVHAEQIVAMDESPSSVLRHKNDSSMWRALELVQQGKADACVSAGNTGALMGCARFILKMLPNISRPAICSTVPNRYGHVHWLDLGANVSAKPEQLKQFAIMGSELSKAVDNIASPTVGLLNVGSEAIKGNDIVKEANTLISATDLNYVGYVEGNDLFLRKDLNVVVCDGFVGNVALKTVEGIAKFIQYGMEAEFKRSFFSRLTALVALPALKRLKKRIDPRMYNGATLLGLQGLVIKSHGNADPIAFANAINLARLEVENNVLHRICEQLQLNPEHDQ.

This sequence belongs to the PlsX family. In terms of assembly, homodimer. Probably interacts with PlsY.

It is found in the cytoplasm. It catalyses the reaction a fatty acyl-[ACP] + phosphate = an acyl phosphate + holo-[ACP]. Its pathway is lipid metabolism; phospholipid metabolism. Catalyzes the reversible formation of acyl-phosphate (acyl-PO(4)) from acyl-[acyl-carrier-protein] (acyl-ACP). This enzyme utilizes acyl-ACP as fatty acyl donor, but not acyl-CoA. The polypeptide is Phosphate acyltransferase (Dichelobacter nodosus (strain VCS1703A)).